Consider the following 141-residue polypeptide: uncharacterized protein (141 aa).

Transmembrane regions (helical) follow at residues 7-24 (YRIPFGIGYLLGTFFLSP), 39-56 (FLKFLWFPFWVFSRHRGI), 69-91 (FYLIFIFFFLYFAVLGVLSILGF), and 116-138 (FFILGLIVADLLHIVLDIVSSFI).

The protein resides in the cell membrane. This is an uncharacterized protein from Aquifex aeolicus (strain VF5).